The following is an 81-amino-acid chain: Large ribosomal subunit protein bL31B (81 aa).

It belongs to the bacterial ribosomal protein bL31 family. Type B subfamily. As to quaternary structure, part of the 50S ribosomal subunit.

The sequence is that of Large ribosomal subunit protein bL31B from Halalkalibacterium halodurans (strain ATCC BAA-125 / DSM 18197 / FERM 7344 / JCM 9153 / C-125) (Bacillus halodurans).